The primary structure comprises 279 residues: Putative pyruvate, phosphate dikinase regulatory protein (279 aa).

Residue 153 to 160 (GVSRTSKT) participates in ADP binding.

This sequence belongs to the pyruvate, phosphate/water dikinase regulatory protein family. PDRP subfamily.

The enzyme catalyses N(tele)-phospho-L-histidyl/L-threonyl-[pyruvate, phosphate dikinase] + ADP = N(tele)-phospho-L-histidyl/O-phospho-L-threonyl-[pyruvate, phosphate dikinase] + AMP + H(+). The catalysed reaction is N(tele)-phospho-L-histidyl/O-phospho-L-threonyl-[pyruvate, phosphate dikinase] + phosphate + H(+) = N(tele)-phospho-L-histidyl/L-threonyl-[pyruvate, phosphate dikinase] + diphosphate. In terms of biological role, bifunctional serine/threonine kinase and phosphorylase involved in the regulation of the pyruvate, phosphate dikinase (PPDK) by catalyzing its phosphorylation/dephosphorylation. In Rhodopseudomonas palustris (strain BisB5), this protein is Putative pyruvate, phosphate dikinase regulatory protein.